The following is a 99-amino-acid chain: MMNMQNMMRQAQKLQKQMEQKQADLAASQFTGKSAQELVTVTFTGDKKLISIDYKEAVVDPEDIETLQDMTTQAINDALSQVDDATKKIMGAFAGKMPF.

Residues 1 to 10 (MMNMQNMMRQ) are compositionally biased toward low complexity. Positions 1 to 20 (MMNMQNMMRQAQKLQKQMEQ) are disordered.

It belongs to the YbaB/EbfC family. In terms of assembly, homodimer.

The protein resides in the cytoplasm. It localises to the nucleoid. In terms of biological role, binds to DNA and alters its conformation. May be involved in regulation of gene expression, nucleoid organization and DNA protection. The polypeptide is Nucleoid-associated protein SAG1747 (Streptococcus agalactiae serotype V (strain ATCC BAA-611 / 2603 V/R)).